The chain runs to 545 residues: Chaperonin GroEL 5 (545 aa).

ATP-binding positions include 30–33, lysine 51, 87–91, glycine 415, and aspartate 495; these read TLGP and DGTTT.

The protein belongs to the chaperonin (HSP60) family. Forms a cylinder of 14 subunits composed of two heptameric rings stacked back-to-back. Interacts with the co-chaperonin GroES.

It is found in the cytoplasm. It carries out the reaction ATP + H2O + a folded polypeptide = ADP + phosphate + an unfolded polypeptide.. Functionally, together with its co-chaperonin GroES, plays an essential role in assisting protein folding. The GroEL-GroES system forms a nano-cage that allows encapsulation of the non-native substrate proteins and provides a physical environment optimized to promote and accelerate protein folding. The chain is Chaperonin GroEL 5 from Sinorhizobium medicae (strain WSM419) (Ensifer medicae).